The chain runs to 115 residues: MATRLLCCVVLCLLGEELIDARVTQTPRHKVTEMGQEVTMRCQPILGHNTVFWYRQTMMQGLELLAYFRNRAPLDDSGMPKDRFSAEMPDATLATLKIQPSEPRDSAVYFCASGL.

An N-terminal signal peptide occupies residues 1–21; it reads MATRLLCCVVLCLLGEELIDA. An Ig-like domain is found at 22–115; sequence RVTQTPRHKV…SAVYFCASGL (94 aa). A disulfide bond links Cys42 and Cys111.

Alpha-beta TR is a heterodimer composed of an alpha and beta chain; disulfide-linked. The alpha-beta TR is associated with the transmembrane signaling CD3 coreceptor proteins to form the TR-CD3 (TcR or TCR). The assembly of alpha-beta TR heterodimers with CD3 occurs in the endoplasmic reticulum where a single alpha-beta TR heterodimer associates with one CD3D-CD3E heterodimer, one CD3G-CD3E heterodimer and one CD247 homodimer forming a stable octameric structure. CD3D-CD3E and CD3G-CD3E heterodimers preferentially associate with TR alpha and TR beta chains, respectively. The association of the CD247 homodimer is the last step of TcR assembly in the endoplasmic reticulum and is required for transport to the cell surface.

It is found in the cell membrane. Functionally, v region of the variable domain of T cell receptor (TR) beta chain that participates in the antigen recognition. Alpha-beta T cell receptors are antigen specific receptors which are essential to the immune response and are present on the cell surface of T lymphocytes. Recognize peptide-major histocompatibility (MH) (pMH) complexes that are displayed by antigen presenting cells (APC), a prerequisite for efficient T cell adaptive immunity against pathogens. Binding of alpha-beta TR to pMH complex initiates TR-CD3 clustering on the cell surface and intracellular activation of LCK that phosphorylates the ITAM motifs of CD3G, CD3D, CD3E and CD247 enabling the recruitment of ZAP70. In turn ZAP70 phosphorylates LAT, which recruits numerous signaling molecules to form the LAT signalosome. The LAT signalosome propagates signal branching to three major signaling pathways, the calcium, the mitogen-activated protein kinase (MAPK) kinase and the nuclear factor NF-kappa-B (NF-kB) pathways, leading to the mobilization of transcription factors that are critical for gene expression and essential for T cell growth and differentiation. The T cell repertoire is generated in the thymus, by V-(D)-J rearrangement. This repertoire is then shaped by intrathymic selection events to generate a peripheral T cell pool of self-MH restricted, non-autoaggressive T cells. Post-thymic interaction of alpha-beta TR with the pMH complexes shapes TR structural and functional avidity. This Homo sapiens (Human) protein is T cell receptor beta variable 12-5.